Here is a 62-residue protein sequence, read N- to C-terminus: MILAFQLSVFALVAISFLLVVGVPVVLASPDGWSTSKNAVFSGASLWIALVFLVGVLNSFIS.

The next 2 helical transmembrane spans lie at serine 8–alanine 28 and phenylalanine 41–isoleucine 61.

It belongs to the PsbZ family. In terms of assembly, PSII is composed of 1 copy each of membrane proteins PsbA, PsbB, PsbC, PsbD, PsbE, PsbF, PsbH, PsbI, PsbJ, PsbK, PsbL, PsbM, PsbT, PsbY, PsbZ, Psb30/Ycf12, at least 3 peripheral proteins of the oxygen-evolving complex and a large number of cofactors. It forms dimeric complexes.

The protein resides in the plastid. Its subcellular location is the chloroplast thylakoid membrane. Functionally, may control the interaction of photosystem II (PSII) cores with the light-harvesting antenna, regulates electron flow through the 2 photosystem reaction centers. PSII is a light-driven water plastoquinone oxidoreductase, using light energy to abstract electrons from H(2)O, generating a proton gradient subsequently used for ATP formation. In Chaetosphaeridium globosum (Charophycean green alga), this protein is Photosystem II reaction center protein Z.